Here is a 249-residue protein sequence, read N- to C-terminus: Isoprenyl transferase 1 (249 aa).

D30 is a catalytic residue. D30 is a binding site for Mg(2+). Substrate-binding positions include 31–34 (GNGR), W35, R43, H47, and 75–77 (STE). Residue N78 is the Proton acceptor of the active site. Residues W79, R81, R198, and 204 to 206 (RMS) contribute to the substrate site. A Mg(2+)-binding site is contributed by E217.

This sequence belongs to the UPP synthase family. Homodimer. The cofactor is Mg(2+).

Functionally, catalyzes the condensation of isopentenyl diphosphate (IPP) with allylic pyrophosphates generating different type of terpenoids. This Tropheryma whipplei (strain Twist) (Whipple's bacillus) protein is Isoprenyl transferase 1.